A 178-amino-acid polypeptide reads, in one-letter code: Large ribosomal subunit protein bL17 (178 aa).

Over residues Asp-126–Glu-139 the composition is skewed to basic and acidic residues. A disordered region spans residues Asp-126–Ala-178. Residues Gln-140 to Ala-163 show a composition bias toward low complexity. Residues Ala-164–Ala-178 show a composition bias toward basic and acidic residues.

Belongs to the bacterial ribosomal protein bL17 family. As to quaternary structure, part of the 50S ribosomal subunit. Contacts protein L32.

The protein is Large ribosomal subunit protein bL17 of Nocardia farcinica (strain IFM 10152).